The chain runs to 141 residues: ATP synthase epsilon chain (141 aa).

It belongs to the ATPase epsilon chain family. F-type ATPases have 2 components, CF(1) - the catalytic core - and CF(0) - the membrane proton channel. CF(1) has five subunits: alpha(3), beta(3), gamma(1), delta(1), epsilon(1). CF(0) has three main subunits: a, b and c.

Its subcellular location is the cell inner membrane. Functionally, produces ATP from ADP in the presence of a proton gradient across the membrane. In Paraburkholderia phytofirmans (strain DSM 17436 / LMG 22146 / PsJN) (Burkholderia phytofirmans), this protein is ATP synthase epsilon chain.